The chain runs to 249 residues: Mitochondrial intermembrane space import and assembly protein 40 (249 aa).

The transit peptide at 1 to 22 (MYRLATRRVLAQTTQTFSKRTF) directs the protein to the mitochondrion. Residues 23–36 (SNQGFRAAKASKTN) lie on the Mitochondrial matrix side of the membrane. The chain crosses the membrane as a helical; Signal-anchor for type II membrane protein span at residues 37-55 (MYLGAGIALIPVIMSINYL). Residues 56 to 249 (NGNHIANEVD…KAKAEDSNTK (194 aa)) are Mitochondrial intermembrane-facing. The segment covering 95–127 (KADVKTKVPAEEANPETRTETDKPSEESQKDEE) has biased composition (basic and acidic residues). The interval 95-136 (KADVKTKVPAEEANPETRTETDKPSEESQKDEENSYEGAAYN) is disordered. Cystine bridges form between C146–C148, C157–C190, and C167–C180. The CHCH domain maps to 154–198 (HGPCGEEFKEAFACFIYSESEPKGIECIKKFESMRNCFREHPEHY). Short sequence motifs (cx9C motif) lie at residues 157–167 (CGEEFKEAFAC) and 180–190 (CIKKFESMRNC). A disordered region spans residues 202–249 (LYDDEEQEPLVDVNEKKGDASEQSAETIADDATKVVKEKAKAEDSNTK). Positions 232 to 249 (DATKVVKEKAKAEDSNTK) are enriched in basic and acidic residues.

In terms of assembly, monomer. The cofactor is Cu(2+). It depends on Zn(2+) as a cofactor.

It localises to the mitochondrion inner membrane. Required for the import and folding of small cysteine-containing proteins (small Tim) in the mitochondrial intermembrane space (IMS). Forms a redox cycle with ERV1 that involves a disulfide relay system. Precursor proteins to be imported into the IMS are translocated in their reduced form into the mitochondria. The oxidized form of MIA40 forms a transient intermolecular disulfide bridge with the reduced precursor protein, resulting in oxidation of the precursor protein that now contains an intramolecular disulfide bond and is able to undergo folding in the IMS. This is Mitochondrial intermembrane space import and assembly protein 40 (MIA40) from Debaryomyces hansenii (strain ATCC 36239 / CBS 767 / BCRC 21394 / JCM 1990 / NBRC 0083 / IGC 2968) (Yeast).